The primary structure comprises 305 residues: FMRFamide-related peptides type HF-4 (305 aa).

A signal peptide spans 1–19 (MTSLCLTIAPAVLSLICLS). 3 positions are modified to phenylalanine amide: Phe36, Phe47, and Phe66. Position 75 is an isoleucine amide (Ile75). Phenylalanine amide is present on residues Phe84 and Phe93. Isoleucine amide is present on Ile102. Phenylalanine amide is present on residues Phe111, Phe120, Phe129, Phe138, Phe147, Phe156, and Phe165. Positions 168 to 305 (SVDGEIEAGV…EHKQEYMRFG (138 aa)) are excised as a propeptide.

Belongs to the FARP (FMRFamide related peptide) family. As to expression, central nervous system.

Its subcellular location is the secreted. Functionally, can function as both cardioregulatory hormones and transmitters and may regulate cardiovascular function. The sequence is that of FMRFamide-related peptides type HF-4 from Cornu aspersum (Brown garden snail).